A 300-amino-acid polypeptide reads, in one-letter code: Putative zinc finger protein 705EP (300 aa).

One can recognise a KRAB domain in the interval 7–78; it reads VTFEDVAIDF…GREFLQDQNP (72 aa). The C2H2-type 1; degenerate zinc finger occupies 172 to 194; that stretch reads YQCNLCEKAYTNCFHLRRPKMTH. C2H2-type zinc fingers lie at residues 200–222 and 228–250; these read YTCH…EKTH and YKCH…ERTH. The C2H2-type 4; degenerate zinc finger occupies 256–278; the sequence is YECDNSGKAFSQSSGFRGNKIIH.

This sequence belongs to the krueppel C2H2-type zinc-finger protein family.

The protein localises to the nucleus. Functionally, may be involved in transcriptional regulation. In Homo sapiens (Human), this protein is Putative zinc finger protein 705EP.